Consider the following 503-residue polypeptide: Aspartyl/glutamyl-tRNA(Asn/Gln) amidotransferase subunit B (503 aa).

It belongs to the GatB/GatE family. GatB subfamily. In terms of assembly, heterotrimer of A, B and C subunits.

It carries out the reaction L-glutamyl-tRNA(Gln) + L-glutamine + ATP + H2O = L-glutaminyl-tRNA(Gln) + L-glutamate + ADP + phosphate + H(+). The enzyme catalyses L-aspartyl-tRNA(Asn) + L-glutamine + ATP + H2O = L-asparaginyl-tRNA(Asn) + L-glutamate + ADP + phosphate + 2 H(+). Allows the formation of correctly charged Asn-tRNA(Asn) or Gln-tRNA(Gln) through the transamidation of misacylated Asp-tRNA(Asn) or Glu-tRNA(Gln) in organisms which lack either or both of asparaginyl-tRNA or glutaminyl-tRNA synthetases. The reaction takes place in the presence of glutamine and ATP through an activated phospho-Asp-tRNA(Asn) or phospho-Glu-tRNA(Gln). This Cereibacter sphaeroides (strain ATCC 17025 / ATH 2.4.3) (Rhodobacter sphaeroides) protein is Aspartyl/glutamyl-tRNA(Asn/Gln) amidotransferase subunit B.